We begin with the raw amino-acid sequence, 346 residues long: tRNA N6-adenosine threonylcarbamoyltransferase (346 aa).

The Fe cation site is built by histidine 111 and histidine 115. Residues 134–138 (LVSGG), aspartate 167, glycine 180, and asparagine 279 each bind substrate. Position 307 (aspartate 307) interacts with Fe cation.

This sequence belongs to the KAE1 / TsaD family. Requires Fe(2+) as cofactor.

The protein resides in the cytoplasm. The enzyme catalyses L-threonylcarbamoyladenylate + adenosine(37) in tRNA = N(6)-L-threonylcarbamoyladenosine(37) in tRNA + AMP + H(+). Functionally, required for the formation of a threonylcarbamoyl group on adenosine at position 37 (t(6)A37) in tRNAs that read codons beginning with adenine. Is involved in the transfer of the threonylcarbamoyl moiety of threonylcarbamoyl-AMP (TC-AMP) to the N6 group of A37, together with TsaE and TsaB. TsaD likely plays a direct catalytic role in this reaction. In Burkholderia pseudomallei (strain K96243), this protein is tRNA N6-adenosine threonylcarbamoyltransferase.